A 397-amino-acid chain; its full sequence is Probable sugar efflux transporter (397 aa).

12 consecutive transmembrane segments (helical) span residues 15–35, 50–70, 81–101, 103–123, 136–156, 169–189, 209–229, 246–266, 275–295, 301–321, 333–353, and 364–384; these read VVTLAIAAFIFNTTEFVPVGL, VGIMLTIYAWVVALMSLPFML, LICLFVLFIASHVLSFLAWNF, VLVISRIGIAFAHAVFWSITA, AQALSLIATGTALAMVLGLPI, TFFAIGIGALITLVCLIKLLP, PALMSIYLLTVVVVTAHYTAY, FATVLLLILGGAGIIGSVVFG, PLISIAIMLLVICLMLLLPAA, LAVLSIFWGIAIMVIGLGMQV, VAMALFSGIFNIGIGAGALVG, and TIGYVGAVPALAALVWSIIIF.

Belongs to the major facilitator superfamily. SotB (TC 2.A.1.2) family.

It is found in the cell inner membrane. Involved in the efflux of sugars. The physiological role may be the reduction of the intracellular concentration of toxic sugars or sugar metabolites. In Citrobacter koseri (strain ATCC BAA-895 / CDC 4225-83 / SGSC4696), this protein is Probable sugar efflux transporter.